The primary structure comprises 1582 residues: ATP-binding cassette sub-family C member 8 (1582 aa).

Residues 1-30 (MPLAFCGTENHSAAYRVDQGVLNNGCFVDA) lie on the Extracellular side of the membrane. Cysteines 6 and 26 form a disulfide. The N-linked (GlcNAc...) asparagine glycan is linked to Asn10. A helical transmembrane segment spans residues 31 to 47 (LNVVPHVFLLFITFPIL). At 48–72 (FIGWGSQSSKVHIHHSTWLHFPGHN) the chain is on the cytoplasmic side. Residues 73 to 89 (LRWILTFILLFVLVCEI) traverse the membrane as a helical segment. At 90–106 (AEGILSDGVTESRHLHL) the chain is on the extracellular side. A helical membrane pass occupies residues 107–123 (YMPAGMAFMAAITSVVY). At 124-136 (YHNIETSNFPKLL) the chain is on the cytoplasmic side. Residues 137-153 (IALLIYWTLAFITKTIK) form a helical membrane-spanning segment. Over 154–169 (FVKFYDHAIGFSQLRF) the chain is Extracellular. A helical membrane pass occupies residues 170–186 (CLTGLLVILYGMLLLVE). At 187–303 (VNVIRVRRYI…AFGRRLILSS (117 aa)) the chain is on the cytoplasmic side. The ABC transmembrane type-1 1 domain maps to 299 to 602 (LILSSTFRIL…LSSVVRSTVK (304 aa)). Residues 304–319 (TFRILADLLGFAGPLC) traverse the membrane as a helical segment. Over 320-356 (IFGIVDHLGKENHVFQPKTQFLGVYFVSSQEFLGNAY) the chain is Extracellular. The helical transmembrane segment at 357 to 372 (VLAVLLFLALLLQRTF) threads the bilayer. At 373 to 438 (LQASYYVAIE…MWFFFLCPNL (66 aa)) the chain is on the cytoplasmic side. The chain crosses the membrane as a helical span at residues 439 to 454 (WTMPVQIIVGVILLYY). The Extracellular portion of the chain corresponds to 455 to 460 (ILGVSA). The helical transmembrane segment at 461-473 (LIGAAVIILLAPV) threads the bilayer. At 474 to 541 (QYFVATKLSQ…SLRAFAVYTS (68 aa)) the chain is on the cytoplasmic side. A helical membrane pass occupies residues 542–557 (ISIFMNTAIPIAAVLI). The Extracellular portion of the chain corresponds to 558 to 576 (TFVGHVSFFKESDLSPSVA). Residues 577-592 (FASLSLFHILVTPLFL) form a helical membrane-spanning segment. Over 593–1013 (LSSVVRSTVK…YLSSAGILLL (421 aa)) the chain is Cytoplasmic. An ABC transporter 1 domain is found at 679 to 930 (VQIIGGFFTW…ECQLFEHWKT (252 aa)). Trp688, Gly716, Ser720, and Ser721 together coordinate ATP. Ser720 serves as a coordination point for Mg(2+). Residues 741-766 (SNLPDSEGEDPSSPERETAAGSDIRS) form a disordered region. Gln775 lines the Mg(2+) pocket. The segment covering 939 to 950 (LEKETVMERKAS) has biased composition (basic and acidic residues). Positions 939-962 (LEKETVMERKASEPSQGLPRAMSS) are disordered. Residues 1013-1307 (LSLLVFSQLL…MVRNLADMEI (295 aa)) enclose the ABC transmembrane type-1 2 domain. The helical transmembrane segment at 1014–1031 (SLLVFSQLLKHMVLVAID) threads the bilayer. At 1032–1067 (YWLAKWTDSALVLSPAARNCSLSQECDLDQSVYAMV) the chain is on the extracellular side. N-linked (GlcNAc...) asparagine glycosylation is present at Asn1050. A helical membrane pass occupies residues 1068–1084 (FTLLCSLGIVLCLVTSV). Over 1085-1143 (TVEWTGLKVAKRLHRSLLNRIILAPMRFFETTPLGSILNRFSSDCNTIDQHIPSTLECL) the chain is Cytoplasmic. A helical transmembrane segment spans residues 1144 to 1161 (SRSTLLCVSALTVISYVT). A topological domain (extracellular) is located at residue Pro1162. Residues 1163 to 1175 (VFLVALLPLAVVC) form a helical membrane-spanning segment. Residues 1176–1249 (YFIQKYFRVA…FLTAANRWLE (74 aa)) are Cytoplasmic-facing. The helical transmembrane segment at 1250 to 1265 (VCMEYIGACVVLIAAA) threads the bilayer. At 1266–1281 (TSISNSLHRELSAGLV) the chain is on the extracellular side. The chain crosses the membrane as a helical span at residues 1282–1297 (GLGLTYALMVSNYLNW). Residues 1298–1582 (MVRNLADMEI…VFASFVRADK (285 aa)) lie on the Cytoplasmic side of the membrane. Positions 1345 to 1579 (IQIQNLSVRY…KDSVFASFVR (235 aa)) constitute an ABC transporter 2 domain. Residues Thr1381, Gly1382, Gly1384, Lys1385, Ser1386, and Ser1387 each coordinate ADP. Ser1483 is an ATP binding site.

Belongs to the ABC transporter superfamily. ABCC family. Conjugate transporter (TC 3.A.1.208) subfamily. Forms an heterooctamer with KCNJ11; four ABCC8/SUR1 molecules interact with one KCNJ11 homotetramer.

The protein localises to the cell membrane. With respect to regulation, KATP channels are regulated by cytoplasmic ATP/ADP ratios; ATP inhibits the channel by closing the pore, while ADP activates the channel. Activated by phosphatidylinositol 4,5-biphosphate (PtdIns(4,5)P2). In terms of biological role, regulator subunit of pancreatic ATP-sensitive potassium channel (KATP), playing a major role in the regulation of insulin release. In pancreatic cells, it forms KATP channels with KCNJ11; KCNJ11 forms the channel pore while ABCC8 is required for activation and regulation. In Cricetus cricetus (Black-bellied hamster), this protein is ATP-binding cassette sub-family C member 8 (ABCC8).